Here is a 915-residue protein sequence, read N- to C-terminus: Protein translocase subunit SecA (915 aa).

ATP contacts are provided by residues Gln87, 105-109, and Asp516; that span reads GEGKT. The interval 854–915 is disordered; it reads QKMQMRHEQL…KYKNCHGQLE (62 aa). Cys899, Cys901, Cys910, and His911 together coordinate Zn(2+).

Belongs to the SecA family. As to quaternary structure, monomer and homodimer. Part of the essential Sec protein translocation apparatus which comprises SecA, SecYEG and auxiliary proteins SecDF-YajC and YidC. Zn(2+) is required as a cofactor.

The protein localises to the cell inner membrane. It is found in the cytoplasm. The enzyme catalyses ATP + H2O + cellular proteinSide 1 = ADP + phosphate + cellular proteinSide 2.. Its function is as follows. Part of the Sec protein translocase complex. Interacts with the SecYEG preprotein conducting channel. Has a central role in coupling the hydrolysis of ATP to the transfer of proteins into and across the cell membrane, serving both as a receptor for the preprotein-SecB complex and as an ATP-driven molecular motor driving the stepwise translocation of polypeptide chains across the membrane. This Cellvibrio japonicus (strain Ueda107) (Pseudomonas fluorescens subsp. cellulosa) protein is Protein translocase subunit SecA.